The chain runs to 356 residues: UDP-N-acetylglucosamine--N-acetylmuramyl-(pentapeptide) pyrophosphoryl-undecaprenol N-acetylglucosamine transferase (356 aa).

UDP-N-acetyl-alpha-D-glucosamine is bound by residues Arg-166, Ser-196, and Gln-290.

It belongs to the glycosyltransferase 28 family. MurG subfamily.

Its subcellular location is the cell membrane. It catalyses the reaction Mur2Ac(oyl-L-Ala-gamma-D-Glu-L-Lys-D-Ala-D-Ala)-di-trans,octa-cis-undecaprenyl diphosphate + UDP-N-acetyl-alpha-D-glucosamine = beta-D-GlcNAc-(1-&gt;4)-Mur2Ac(oyl-L-Ala-gamma-D-Glu-L-Lys-D-Ala-D-Ala)-di-trans,octa-cis-undecaprenyl diphosphate + UDP + H(+). It functions in the pathway cell wall biogenesis; peptidoglycan biosynthesis. In terms of biological role, cell wall formation. Catalyzes the transfer of a GlcNAc subunit on undecaprenyl-pyrophosphoryl-MurNAc-pentapeptide (lipid intermediate I) to form undecaprenyl-pyrophosphoryl-MurNAc-(pentapeptide)GlcNAc (lipid intermediate II). This Staphylococcus aureus (strain Mu3 / ATCC 700698) protein is UDP-N-acetylglucosamine--N-acetylmuramyl-(pentapeptide) pyrophosphoryl-undecaprenol N-acetylglucosamine transferase.